The primary structure comprises 191 residues: UPF0312 protein PA0423 (191 aa).

A signal peptide spans 1 to 23 (MLKKTLAALALGSALFTAGQAMA).

The protein belongs to the UPF0312 family. Type 1 subfamily.

It is found in the periplasm. The sequence is that of UPF0312 protein PA0423 from Pseudomonas aeruginosa (strain ATCC 15692 / DSM 22644 / CIP 104116 / JCM 14847 / LMG 12228 / 1C / PRS 101 / PAO1).